The primary structure comprises 108 residues: Flagellar hook-basal body complex protein FliE (108 aa).

The protein belongs to the FliE family.

The protein resides in the bacterial flagellum basal body. The chain is Flagellar hook-basal body complex protein FliE from Pseudomonas fluorescens (strain ATCC BAA-477 / NRRL B-23932 / Pf-5).